The following is a 431-amino-acid chain: Cleavage stimulation factor subunit 1 (431 aa).

WD repeat units lie at residues 106-145 (SHKGPCRVATYSRDGQLIATGSADASIKILDTERMLAKSA), 171-210 (DHVDEVTCLAFHPTEQILASGSRDYTLKLFDYSKPSAKRA), 215-254 (QEAEMLRSISFHPSGDFILVGTQHPTLRLYDINTFQCFVS), 260-301 (QHTD…TTFE), 303-343 (AHDG…TLVR), and 395-431 (GHNNIVRCIVHSPTNPGFMTCSDDFRARFWYRRSTTD).

In terms of assembly, homodimer. The CSTF complex is composed of CSTF1 (50 kDa subunit), CSTF2 (64 kDa subunit) and CSTF3 (77 kDa subunit). Interacts (via repeats WD) directly with CSTF3. Interacts (via repeat WD6) with BARD1. Interacts with ERCC6.

The protein resides in the nucleus. One of the multiple factors required for polyadenylation and 3'-end cleavage of mammalian pre-mRNAs. May be responsible for the interaction of CSTF with other factors to form a stable complex on the pre-mRNA. This is Cleavage stimulation factor subunit 1 (Cstf1) from Mus musculus (Mouse).